The chain runs to 36 residues: Glucagon (36 aa).

This sequence belongs to the glucagon family. In terms of tissue distribution, produced by the X-cells of the islets of pancreas.

It is found in the secreted. In terms of biological role, promotes hydrolysis of glycogen and lipids, and raises the blood sugar level. The chain is Glucagon (gcg) from Hydrolagus colliei (Spotted ratfish).